An 800-amino-acid polypeptide reads, in one-letter code: MRISLKWLSEYVDLPAPEELARRLTAVGFEIEAVERTGAELKGVVAARIAASEPHPNAEKLSVTRVDAGGGEPLQVVCGAKNYRVGDVVPLATVGAELPGGARISKAKLRGVESFGMLCSARELGLSADASGLLILPPGTVPGTPIGEALDLDDVLLEVNVTPNRPDALSHVGIAREVAALLGQKVRLPKPGLVEGGGAAADAVKVRIEAPEKCARYAARVVEGVKIGPSPAWLARRLERCGIRSISNVVDATNYVLLELGHPLHAFDLDEVAGHEIVVRTARPGERITTLDGKDRALEPDDLLIADRDRGSALAGVMGGGDSEISAGTTRVLLESAWFAPSGVRRTSRRHGLKSEASYRFERGADPGMVIPALDRCAALIAGLSGGTVRAGVVDAQARKVASPEVRMRWDRPAQVLGMPVSREDARRILLSLGFEERASDGDAVSFGVPSWRVDVSIEEDLVEEIVRTLGYDAIPETLPGPAVRTPAESAEAQAVARARAALEAAGFSEAVNFSFVAARDLEPLAGGLAADGIALRNPISADLAVMRTSLVPSLLRNAAHNRRQRVEDVRLYEIARAYGPRAAGTPGDAPSHEATEVAGVLLGRRSPVGWAVGGDVADFHDAKAAVQGLLEALGVEAAWAAPGPGWLHPRTSAALRAPGGAALGELGELHPRVAEAFELPRGVLAFRLSLDALLAAARLVPQYRPIPRLPAVLRDVAVVVEDAVTAAAVEALVREEPLVEAVILFDVYKGAPLPAGRKNLALAITYRAPDRTLTDAEADAAHGRIVARLRERVGAELRG.

Residues 38 to 147 form the tRNA-binding domain; sequence GAELKGVVAA…PGTVPGTPIG (110 aa). In terms of domain architecture, B5 spans 401–477; sequence VASPEVRMRW…RTLGYDAIPE (77 aa). Positions 455, 461, 464, and 465 each coordinate Mg(2+). Residues 708-799 form the FDX-ACB domain; sequence PRLPAVLRDV…LRERVGAELR (92 aa).

This sequence belongs to the phenylalanyl-tRNA synthetase beta subunit family. Type 1 subfamily. Tetramer of two alpha and two beta subunits. Mg(2+) is required as a cofactor.

The protein resides in the cytoplasm. It carries out the reaction tRNA(Phe) + L-phenylalanine + ATP = L-phenylalanyl-tRNA(Phe) + AMP + diphosphate + H(+). This is Phenylalanine--tRNA ligase beta subunit from Anaeromyxobacter dehalogenans (strain 2CP-C).